Here is a 350-residue protein sequence, read N- to C-terminus: Phosphotriesterase-related protein (350 aa).

A divalent metal cation contacts are provided by His22, His24, Glu169, His201, His230, and Asp298.

This sequence belongs to the metallo-dependent hydrolases superfamily. Phosphotriesterase family. The cofactor is a divalent metal cation.

This chain is Phosphotriesterase-related protein, found in Drosophila grimshawi (Hawaiian fruit fly).